A 322-amino-acid chain; its full sequence is Serine protease Lpg1137 (322 aa).

Residue serine 68 is part of the active site.

The protein resides in the secreted. It is found in the host mitochondrion membrane. Its function is as follows. Serine protease effector that inhibits host cell autophagy by targeting SNX17. Localizes to the host endoplasmic reticulum-mitochondria contact site and catalyzes degradation of host SNX17, thereby impairing endoplasmic reticulum-mitochondria communication, leading to inhibit autophagy as well as staurosporine-induced apoptosis. In Legionella pneumophila subsp. pneumophila (strain Philadelphia 1 / ATCC 33152 / DSM 7513), this protein is Serine protease Lpg1137.